The chain runs to 45 residues: Amphipathic peptide Hj0164 (45 aa).

The N-terminal stretch at 1 to 23 (MKSQAFFLLFLVVLLLATTQSEA) is a signal peptide. Phenylalanine amide is present on Phe-33. Residues 37–45 (SLRDVDTMK) constitute a propeptide that is removed on maturation.

It belongs to the non-disulfide-bridged peptide (NDBP) superfamily. Short antimicrobial peptide (group 4) family. Expressed by the venom gland.

It is found in the secreted. It localises to the target cell membrane. In terms of biological role, amphipathic peptide that shows antibacterial activities. In Hottentotta judaicus (Black scorpion), this protein is Amphipathic peptide Hj0164.